A 153-amino-acid polypeptide reads, in one-letter code: FAD synthase (153 aa).

ATP contacts are provided by residues 9–10 (TF), 14–17 (HPGH), asparagine 92, and tyrosine 119.

It belongs to the archaeal FAD synthase family. In terms of assembly, homodimer. The cofactor is a divalent metal cation.

The enzyme catalyses FMN + ATP + H(+) = FAD + diphosphate. The protein operates within cofactor biosynthesis; FAD biosynthesis; FAD from FMN: step 1/1. Catalyzes the transfer of the AMP portion of ATP to flavin mononucleotide (FMN) to produce flavin adenine dinucleotide (FAD) coenzyme. This is FAD synthase from Methanosphaerula palustris (strain ATCC BAA-1556 / DSM 19958 / E1-9c).